The primary structure comprises 276 residues: NAD-capped RNA hydrolase NudC (276 aa).

Arg-82 serves as a coordination point for substrate. Cys-112 and Cys-115 together coordinate Zn(2+). Position 125 (Glu-125) interacts with substrate. Zn(2+) contacts are provided by Cys-130 and Cys-133. Tyr-138 contacts substrate. A Nudix hydrolase domain is found at 139-262 (PRISPSMIVL…SIARYLIDVY (124 aa)). Residues Ala-172, Glu-188, and Glu-192 each contribute to the a divalent metal cation site. Positions 173–194 (GFAEPGESAEDCLIREVREEVQ) match the Nudix box motif. 206–213 (QCWPFPHS) provides a ligand contact to substrate. Residue Glu-233 participates in a divalent metal cation binding. A substrate-binding site is contributed by Ala-255.

It belongs to the Nudix hydrolase family. NudC subfamily. Homodimer. Mg(2+) is required as a cofactor. The cofactor is Mn(2+). Zn(2+) serves as cofactor.

The enzyme catalyses a 5'-end NAD(+)-phospho-ribonucleoside in mRNA + H2O = a 5'-end phospho-adenosine-phospho-ribonucleoside in mRNA + beta-nicotinamide D-ribonucleotide + 2 H(+). It catalyses the reaction NAD(+) + H2O = beta-nicotinamide D-ribonucleotide + AMP + 2 H(+). It carries out the reaction NADH + H2O = reduced beta-nicotinamide D-ribonucleotide + AMP + 2 H(+). MRNA decapping enzyme that specifically removes the nicotinamide adenine dinucleotide (NAD) cap from a subset of mRNAs by hydrolyzing the diphosphate linkage to produce nicotinamide mononucleotide (NMN) and 5' monophosphate mRNA. The NAD-cap is present at the 5'-end of some mRNAs and stabilizes RNA against 5'-processing. Has preference for mRNAs with a 5'-end purine. Catalyzes the hydrolysis of a broad range of dinucleotide pyrophosphates. In Pseudomonas fluorescens (strain Pf0-1), this protein is NAD-capped RNA hydrolase NudC.